We begin with the raw amino-acid sequence, 880 residues long: Probable potassium channel AKT5 (880 aa).

Residues 1-82 (MGIEKRKKMV…PFDPRYRAWD (82 aa)) lie on the Cytoplasmic side of the membrane. The chain crosses the membrane as a helical span at residues 83-103 (WFLVILVLYTAWASPFEFGFL). Over 104 to 111 (QTPRAPLS) the chain is Extracellular. The helical transmembrane segment at 112–132 (ILDNVVNGFFAVDIVLTFFVA) threads the bilayer. The Cytoplasmic segment spans residues 133–153 (FLDKATYLLVDDPKRIAWRYT). The helical transmembrane segment at 154–174 (STWLIFDVVSTVPYELFGSLL) threads the bilayer. At 175–182 (HNTIQGYG) the chain is on the extracellular side. The chain crosses the membrane as a helical; Voltage-sensor span at residues 183 to 203 (IFSMLRLWRLHRVSKCFARLE). Residues 204–217 (KDRKYNYFWIRCTK) lie on the Cytoplasmic side of the membrane. Residues 218-238 (LLLVSLFVVHCGACFCYSIAA) form a helical membrane-spanning segment. Residues 239–265 (HYPDPSMTFMALAEANWKQKSLLIRYV) lie on the Extracellular side of the membrane. The segment at residues 266-285 (TAMYWSITTFSTTGYGDIHG) is an intramembrane region (pore-forming). The Extracellular portion of the chain corresponds to 286–291 (NNAEER). Residues 292–312 (AFILFYMIFNLGLLAYIIGNM) form a helical membrane-spanning segment. The Cytoplasmic segment spans residues 313 to 880 (TNLVVHVTSR…GDFLLLLKVS (568 aa)). An a nucleoside 3',5'-cyclic phosphate-binding site is contributed by 396 to 517 (LFHGISNDLL…IMNNLLQHLK (122 aa)). ANK repeat units follow at residues 541–570 (DLPLSLCFAAARGDDLLLHQLLKRGSNPNE), 574–603 (NGRTALHIAASKGSQYCVVLLLEHGADPNI), 607–636 (EGSVPLWEAIIGRHEENAKLLSENGATLSF), 637–667 (DTVGYFSCLAVGQNNLNALKDIVKYGGDISL), and 671–700 (NGTTALHRAVSEGNLEIVQFLLEKGADMDK). The KHA domain occupies 809–880 (VGGVYPARVT…GDFLLLLKVS (72 aa)).

It belongs to the potassium channel family. Plant (TC 1.A.1.4) subfamily. The potassium channel is probably composed of a homo- or heterotetrameric complex of pore-forming subunits. Predominantly expressed in flowers.

It is found in the membrane. In terms of biological role, probable potassium channel. May interact with the cytoskeleton or with regulatory proteins. This is Probable potassium channel AKT5 (AKT5) from Arabidopsis thaliana (Mouse-ear cress).